The following is a 612-amino-acid chain: Chaperone protein DnaK (612 aa).

T174 bears the Phosphothreonine; by autocatalysis mark. Residues 579 to 612 (GSAGTGAGSQAGSAAGSGDGQSMDAEFKVKDEDK) form a disordered region. Gly residues predominate over residues 581–597 (AGTGAGSQAGSAAGSGD). A compositionally biased stretch (basic and acidic residues) spans 603–612 (AEFKVKDEDK).

It belongs to the heat shock protein 70 family.

Acts as a chaperone. This Symbiobacterium thermophilum (strain DSM 24528 / JCM 14929 / IAM 14863 / T) protein is Chaperone protein DnaK.